A 146-amino-acid chain; its full sequence is 3-dehydroquinate dehydratase (146 aa).

The active-site Proton acceptor is the Tyr-24. 3 residues coordinate substrate: Asn-73, His-79, and Asp-86. His-99 acts as the Proton donor in catalysis. Residues 100–101 and Arg-110 contribute to the substrate site; that span reads LS.

Belongs to the type-II 3-dehydroquinase family. As to quaternary structure, homododecamer.

The enzyme catalyses 3-dehydroquinate = 3-dehydroshikimate + H2O. It functions in the pathway metabolic intermediate biosynthesis; chorismate biosynthesis; chorismate from D-erythrose 4-phosphate and phosphoenolpyruvate: step 3/7. In terms of biological role, catalyzes a trans-dehydration via an enolate intermediate. The protein is 3-dehydroquinate dehydratase of Shewanella baltica (strain OS223).